Here is an 87-residue protein sequence, read N- to C-terminus: UPF0250 protein NE1487 (87 aa).

Belongs to the UPF0250 family.

The protein is UPF0250 protein NE1487 of Nitrosomonas europaea (strain ATCC 19718 / CIP 103999 / KCTC 2705 / NBRC 14298).